The chain runs to 72 residues: Translation initiation factor IF-1 (72 aa).

Residues 1–72 enclose the S1-like domain; sequence MAKEEMLEFP…TKGRINYRFK (72 aa).

Belongs to the IF-1 family. In terms of assembly, component of the 30S ribosomal translation pre-initiation complex which assembles on the 30S ribosome in the order IF-2 and IF-3, IF-1 and N-formylmethionyl-tRNA(fMet); mRNA recruitment can occur at any time during PIC assembly.

It localises to the cytoplasm. In terms of biological role, one of the essential components for the initiation of protein synthesis. Stabilizes the binding of IF-2 and IF-3 on the 30S subunit to which N-formylmethionyl-tRNA(fMet) subsequently binds. Helps modulate mRNA selection, yielding the 30S pre-initiation complex (PIC). Upon addition of the 50S ribosomal subunit IF-1, IF-2 and IF-3 are released leaving the mature 70S translation initiation complex. In Paracoccus denitrificans (strain Pd 1222), this protein is Translation initiation factor IF-1.